Reading from the N-terminus, the 283-residue chain is ATP synthase gamma chain (283 aa).

It belongs to the ATPase gamma chain family. In terms of assembly, F-type ATPases have 2 components, CF(1) - the catalytic core - and CF(0) - the membrane proton channel. CF(1) has five subunits: alpha(3), beta(3), gamma(1), delta(1), epsilon(1). CF(0) has three main subunits: a, b and c.

Its subcellular location is the cell membrane. In terms of biological role, produces ATP from ADP in the presence of a proton gradient across the membrane. The gamma chain is believed to be important in regulating ATPase activity and the flow of protons through the CF(0) complex. The protein is ATP synthase gamma chain of Clostridium botulinum (strain Eklund 17B / Type B).